Reading from the N-terminus, the 402-residue chain is Tol-Pal system protein TolB (402 aa).

The first 17 residues, 1-17 (MKKIVAIFLVFLGSLWA), serve as a signal peptide directing secretion.

It belongs to the TolB family. The Tol-Pal system is composed of five core proteins: the inner membrane proteins TolA, TolQ and TolR, the periplasmic protein TolB and the outer membrane protein Pal. They form a network linking the inner and outer membranes and the peptidoglycan layer.

It is found in the periplasm. In terms of biological role, part of the Tol-Pal system, which plays a role in outer membrane invagination during cell division and is important for maintaining outer membrane integrity. The polypeptide is Tol-Pal system protein TolB (Campylobacter jejuni subsp. jejuni serotype O:2 (strain ATCC 700819 / NCTC 11168)).